The primary structure comprises 356 residues: Guanine nucleotide-binding protein alpha-15 subunit (356 aa).

The N-myristoyl glycine moiety is linked to residue Gly2. A lipid anchor (S-palmitoyl cysteine) is attached at Cys5. Positions 33 to 356 (GNQKLLLLGT…GRNLRGTGME (324 aa)) constitute a G-alpha domain. Positions 36-49 (KLLLLGTGECGKST) are G1 motif. Residues 41 to 48 (GTGECGKS), 177 to 183 (LRIRIPT), 202 to 206 (DVGGQ), 271 to 274 (NKRD), and Ala328 each bind GTP. 2 residues coordinate Mg(2+): Ser48 and Thr183. A G2 motif region spans residues 175–183 (DMLRIRIPT). Residues 198–207 (FRIFDVGGQR) form a G3 motif region. The G4 motif stretch occupies residues 267–274 (ILFLNKRD). The G5 motif stretch occupies residues 326 to 331 (TCATDT).

This sequence belongs to the G-alpha family. As to quaternary structure, g proteins are composed of 3 units; alpha, beta and gamma. The alpha chain contains the guanine nucleotide binding site.

Guanine nucleotide-binding proteins (G proteins) are involved as modulators or transducers in various transmembrane signaling systems. The protein is Guanine nucleotide-binding protein alpha-15 subunit (gpa-15) of Caenorhabditis briggsae.